The primary structure comprises 62 residues: Guanine nucleotide-binding protein subunit gamma (62 aa).

The disordered stretch occupies residues 40 to 62 (DMLVSGPTDQHNPFQEKKSCSVL). A compositionally biased stretch (basic and acidic residues) spans 53–62 (FQEKKSCSVL). Cys-59 carries the cysteine methyl ester modification. Cys-59 is lipidated: S-geranylgeranyl cysteine. The propeptide at 60–62 (SVL) is removed in mature form.

It belongs to the G protein gamma family. In terms of assembly, g proteins are composed of 3 units, alpha, beta and gamma. Interacts with gpb-1 and gpb-2. Predominantly expressed in the central nervous system.

The protein localises to the cell membrane. Guanine nucleotide-binding proteins (G proteins) are involved as a modulator or transducer in various transmembrane signaling systems. The beta and gamma chains are required for the GTPase activity, for replacement of GDP by GTP, and for G protein-effector interaction. The chain is Guanine nucleotide-binding protein subunit gamma (gpc-1) from Caenorhabditis elegans.